A 207-amino-acid polypeptide reads, in one-letter code: Large ribosomal subunit protein uL3 (207 aa).

This sequence belongs to the universal ribosomal protein uL3 family. Part of the 50S ribosomal subunit. Forms a cluster with proteins L14 and L19.

In terms of biological role, one of the primary rRNA binding proteins, it binds directly near the 3'-end of the 23S rRNA, where it nucleates assembly of the 50S subunit. The sequence is that of Large ribosomal subunit protein uL3 from Thermotoga maritima (strain ATCC 43589 / DSM 3109 / JCM 10099 / NBRC 100826 / MSB8).